The primary structure comprises 291 residues: MSKMDKLAKFEKFDLFFAAIACICGILKVMEMGKEGYPTLGTVSKNGMAVLAVLVALGFLLKYADQMCRRITSHSFSEKGGFLNPCVILSVIEFFMMLICIKAMLFYPAEIPGVDDSSQMEPPISSKFGLFGAIFMPYIFAECIRLLLANKNSRRDRVILGILVLGCLAMAGLAYLEYKGKGNFISAGILGVGLSMLLSRLALVDEDEEDTLLDDSAEGGNVWMYLAMFASFTLVLILLARSHRILFDNLSFLDSLKSFTFLGRKVSQMASEDPPKDPLPRQEGGGGDTIA.

6 helical membrane-spanning segments follow: residues 13 to 33 (FDLF…MEMG), 40 to 60 (LGTV…LGFL), 81 to 101 (GFLN…LICI), 128 to 148 (FGLF…RLLL), 158 to 178 (VILG…YLEY), and 220 to 240 (GNVW…ILLA). N-linked (GlcNAc...) asparagine glycosylation occurs at Asn249. The segment at 269-291 (MASEDPPKDPLPRQEGGGGDTIA) is disordered.

It localises to the membrane. This is an uncharacterized protein from Encephalitozoon cuniculi (strain GB-M1) (Microsporidian parasite).